The primary structure comprises 200 residues: ATP-dependent Clp protease proteolytic subunit (200 aa).

The Nucleophile role is filled by Ser105. Residue His130 is part of the active site.

This sequence belongs to the peptidase S14 family. In terms of assembly, fourteen ClpP subunits assemble into 2 heptameric rings which stack back to back to give a disk-like structure with a central cavity, resembling the structure of eukaryotic proteasomes.

The protein localises to the cytoplasm. The enzyme catalyses Hydrolysis of proteins to small peptides in the presence of ATP and magnesium. alpha-casein is the usual test substrate. In the absence of ATP, only oligopeptides shorter than five residues are hydrolyzed (such as succinyl-Leu-Tyr-|-NHMec, and Leu-Tyr-Leu-|-Tyr-Trp, in which cleavage of the -Tyr-|-Leu- and -Tyr-|-Trp bonds also occurs).. In terms of biological role, cleaves peptides in various proteins in a process that requires ATP hydrolysis. Has a chymotrypsin-like activity. Plays a major role in the degradation of misfolded proteins. This Hydrogenovibrio crunogenus (strain DSM 25203 / XCL-2) (Thiomicrospira crunogena) protein is ATP-dependent Clp protease proteolytic subunit.